The primary structure comprises 1024 residues: Beta-galactosidase (1024 aa).

Substrate contacts are provided by asparagine 103 and aspartate 202. Aspartate 202 is a Na(+) binding site. Mg(2+) contacts are provided by glutamate 417, histidine 419, and glutamate 462. Substrate is bound by residues glutamate 462 and 538–541; that span reads EYAH. Glutamate 462 serves as the catalytic Proton donor. Glutamate 538 acts as the Nucleophile in catalysis. Asparagine 598 provides a ligand contact to Mg(2+). 2 residues coordinate Na(+): phenylalanine 602 and asparagine 605. Asparagine 605 and tryptophan 1000 together coordinate substrate.

Belongs to the glycosyl hydrolase 2 family. Homotetramer. Mg(2+) is required as a cofactor. Requires Na(+) as cofactor.

The catalysed reaction is Hydrolysis of terminal non-reducing beta-D-galactose residues in beta-D-galactosides.. This is Beta-galactosidase from Escherichia coli (strain UTI89 / UPEC).